The chain runs to 605 residues: Putative glutaminase 2 (605 aa).

Substrate contacts are provided by S213, N262, E308, N315, Y342, Y394, and V412. ANK repeat units follow at residues 480-509 (DRLIPVFHVARAGDLPTMRRLYMQGEDLNT) and 513-543 (DDRTVLHIAATEGYETMIKFLVNVAKVDVDK). The segment covering 569 to 581 (KAMKRPEQHRKDS) has biased composition (basic and acidic residues). A disordered region spans residues 569-605 (KAMKRPEQHRKDSVSSLDTDDEIDDDGFPEKPSFTID). The span at 586–595 (DTDDEIDDDG) shows a compositional bias: acidic residues.

The protein belongs to the glutaminase family.

The catalysed reaction is L-glutamine + H2O = L-glutamate + NH4(+). In Caenorhabditis elegans, this protein is Putative glutaminase 2 (glna-2).